Reading from the N-terminus, the 291-residue chain is NAD kinase (291 aa).

The active-site Proton acceptor is the D55. Residues 55-56 (DG), R60, 130-131 (NE), D160, and 171-176 (TAYAFS) contribute to the NAD(+) site.

It belongs to the NAD kinase family. The cofactor is a divalent metal cation.

It localises to the cytoplasm. The catalysed reaction is NAD(+) + ATP = ADP + NADP(+) + H(+). Functionally, involved in the regulation of the intracellular balance of NAD and NADP, and is a key enzyme in the biosynthesis of NADP. Catalyzes specifically the phosphorylation on 2'-hydroxyl of the adenosine moiety of NAD to yield NADP. This is NAD kinase from Corynebacterium glutamicum (strain ATCC 13032 / DSM 20300 / JCM 1318 / BCRC 11384 / CCUG 27702 / LMG 3730 / NBRC 12168 / NCIMB 10025 / NRRL B-2784 / 534).